The following is a 168-amino-acid chain: Probable chemoreceptor glutamine deamidase CheD 2 (168 aa).

Belongs to the CheD family.

It carries out the reaction L-glutaminyl-[protein] + H2O = L-glutamyl-[protein] + NH4(+). Its function is as follows. Probably deamidates glutamine residues to glutamate on methyl-accepting chemotaxis receptors (MCPs), playing an important role in chemotaxis. This Leptospira interrogans serogroup Icterohaemorrhagiae serovar copenhageni (strain Fiocruz L1-130) protein is Probable chemoreceptor glutamine deamidase CheD 2.